The following is a 100-amino-acid chain: NADH-quinone oxidoreductase subunit K 1 (100 aa).

A run of 3 helical transmembrane segments spans residues 4–24 (LHSY…GVLV), 29–49 (IVIF…FIAL), and 60–80 (IFVF…LALM).

This sequence belongs to the complex I subunit 4L family. As to quaternary structure, NDH-1 is composed of 14 different subunits. Subunits NuoA, H, J, K, L, M, N constitute the membrane sector of the complex.

The protein localises to the cell inner membrane. The catalysed reaction is a quinone + NADH + 5 H(+)(in) = a quinol + NAD(+) + 4 H(+)(out). Functionally, NDH-1 shuttles electrons from NADH, via FMN and iron-sulfur (Fe-S) centers, to quinones in the respiratory chain. The immediate electron acceptor for the enzyme in this species is believed to be ubiquinone. Couples the redox reaction to proton translocation (for every two electrons transferred, four hydrogen ions are translocated across the cytoplasmic membrane), and thus conserves the redox energy in a proton gradient. This is NADH-quinone oxidoreductase subunit K 1 from Geobacter sulfurreducens (strain ATCC 51573 / DSM 12127 / PCA).